The sequence spans 970 residues: Cullin-4B (970 aa).

The span at 1 to 14 shows a compositional bias: basic and acidic residues; sequence MSRSTRSKERREND. Disordered regions lie at residues 1–157 and 189–211; these read MSRS…SFCL and AEES…QQQQ. At threonine 15 the chain carries Phosphothreonine. Phosphoserine is present on serine 17. Residues 36–57 show a composition bias toward pro residues; sequence PPRPPYPPLLPPVFPPPTPPPQ. Residues 78–98 show a composition bias toward low complexity; sequence SGFSSPNPSAASAAAQEVRSA. Over residues 99-109 the composition is skewed to polar residues; sequence TDGNTSTTPPT. A Phosphothreonine modification is found at threonine 106. Serine 110 bears the Phosphoserine mark. A Nuclear localization signal motif is present at residues 112 to 115; the sequence is KKRK. Positions 117–126 are enriched in low complexity; the sequence is NSSSSSSNSS. Positions 146–155 are enriched in polar residues; sequence DSASPSTSSF. Phosphoserine is present on residues serine 154 and serine 200. Residues 192-211 show a composition bias toward low complexity; the sequence is SSSSSSSSSPTAATSQQQQQ. Threonine 202 bears the Phosphothreonine mark. A Glycyl lysine isopeptide (Lys-Gly) (interchain with G-Cter in ubiquitin) cross-link involves residue lysine 247. The residue at position 250 (serine 250) is a Phosphoserine. The Cullin neddylation domain maps to 902-962; it reads DRQYQIDAAI…RDYMERDKEN (61 aa). Residue lysine 916 forms a Glycyl lysine isopeptide (Lys-Gly) (interchain with G-Cter in NEDD8) linkage.

The protein belongs to the cullin family. As to quaternary structure, component of multiple DCX (DDB1-CUL4-X-box) E3 ubiquitin-protein ligase complexes that seem to be formed of DDB1, CUL4A or CUL4B, RBX1 and a variable substrate recognition component which seems to belong to a protein family described as DCAF (Ddb1- and Cul4-associated factor) or CDW (CUL4-DDB1-associated WD40-repeat) proteins. Component of the DCX(DTL) complex with the putative substrate recognition component DTL. Component of the DCX(DDB2) complex with the putative substrate recognition component DDB2. Component of DCX complexes part of the DesCEND (destruction via C-end degrons) pathway, which contain either TRPC4AP or DCAF12 as substrate-recognition component. Component of the DCX(AMBRA1) complex with the substrate recognition component AMBRA1. Part of a complex with RBX1 and TIP120A/CAND1. Component of the DCX(WDR77) complex, composed of Cul4b, Ddb1, Wdr77 and Rbx1. Interacts with RBX1, GRWD1, MLST8, SMU1, TLE2, TLE3, DCAF1, DDA1, DCAF6, DCAF17, DDB2, DCAF8, TIP120A/CAND1 and TMEM113. Interacts with cyclin E (CCNE1 or CCNE2) and with importins alpha-1 (KPNA2), alpha-3 (KPNA4), alpha-5 (KPNA1) and beta-1 (KPNB1). May interact with WDR26, WDR51B, SNRNP40, WDR61, WDR76 and WDR5. Interacts (unneddylated form) with DCUN1D1, DCUN1D2, DCUN1D3, DCUN1D4 and DCUN1D5; these interactions promote the cullin neddylation. Post-translationally, neddylated. Deneddylated via its interaction with the COP9 signalosome (CSN) complex. In terms of tissue distribution, expressed in oocytes (at protein level).

It is found in the cytoplasm. The protein localises to the nucleus. It participates in protein modification; protein ubiquitination. Its function is as follows. Core component of multiple cullin-RING-based E3 ubiquitin-protein ligase complexes which mediate the ubiquitination and subsequent proteasomal degradation of target proteins. The functional specificity of the E3 ubiquitin-protein ligase complex depends on the variable substrate recognition subunit. CUL4B may act within the complex as a scaffold protein, contributing to catalysis through positioning of the substrate and the ubiquitin-conjugating enzyme. Plays a role as part of the E3 ubiquitin-protein ligase complex in polyubiquitination of CDT1, histone H2A, histone H3 and histone H4 in response to radiation-induced DNA damage. Targeted to UV damaged chromatin by DDB2 and may be important for DNA repair and DNA replication. A number of DCX complexes (containing either TRPC4AP or DCAF12 as substrate-recognition component) are part of the DesCEND (destruction via C-end degrons) pathway, which recognizes a C-degron located at the extreme C terminus of target proteins, leading to their ubiquitination and degradation. The DCX(AMBRA1) complex is a master regulator of the transition from G1 to S cell phase by mediating ubiquitination of phosphorylated cyclin-D (CCND1, CCND2 and CCND3). The DCX(AMBRA1) complex also acts as a regulator of Cul5-RING (CRL5) E3 ubiquitin-protein ligase complexes by mediating ubiquitination and degradation of Elongin-C (ELOC) component of CRL5 complexes. Required for ubiquitination of cyclin E (CCNE1 or CCNE2), and consequently, normal G1 cell cycle progression. Component of the DCX(WDR77) complex, which mediates ubiquitination and degradation of Irgm1 in intestinal cells. Regulates the mammalian target-of-rapamycin (mTOR) pathway involved in control of cell growth, size and metabolism. Specific CUL4B regulation of the mTORC1-mediated pathway is dependent upon 26S proteasome function and requires interaction between CUL4B and MLST8. With CUL4A, contributes to ribosome biogenesis. In Mus musculus (Mouse), this protein is Cullin-4B.